Here is a 559-residue protein sequence, read N- to C-terminus: Glycerol kinase (559 aa).

Thr20 serves as a coordination point for ADP. Residues Thr20, Ser21, and Ser22 each coordinate ATP. Residue Thr20 participates in sn-glycerol 3-phosphate binding. Residue Arg24 coordinates ADP. Arg94, Glu95, and Tyr148 together coordinate sn-glycerol 3-phosphate. The glycerol site is built by Arg94, Glu95, and Tyr148. Gly252 serves as a coordination point for beta-D-fructose 1,6-bisphosphate. Residue Asp265 coordinates sn-glycerol 3-phosphate. Asp265 and Gln266 together coordinate glycerol. ADP contacts are provided by Thr287, Gly332, Gly433, and Asn437. ATP-binding residues include Thr287, Gly332, and Gly433. Glu501 contacts Zn(2+). A helical membrane pass occupies residues 532–552 (IFCSLPLGFFIVSSVVMLIGA).

It belongs to the FGGY kinase family.

It is found in the mitochondrion outer membrane. The protein localises to the nucleus. The protein resides in the cytoplasm. Its subcellular location is the cytosol. The catalysed reaction is glycerol + ATP = sn-glycerol 3-phosphate + ADP + H(+). The protein operates within polyol metabolism; glycerol degradation via glycerol kinase pathway; sn-glycerol 3-phosphate from glycerol: step 1/1. Kinase that plays a key role in glycerol metabolism, catalyzing its phosphorylation to produce sn-glycerol 3-phosphate. Sn-glycerol 3-phosphate is a crucial intermediate in various metabolic pathways, such as the synthesis of glycerolipids and triglycerides, glycogenesis, glycolysis and gluconeogenesis. This Bos taurus (Bovine) protein is Glycerol kinase.